The chain runs to 174 residues: Adipose-secreted signaling protein (174 aa).

This sequence belongs to the ADISSP family.

It is found in the secreted. In terms of biological role, may be involved in thermogenesis and glucose homeostasis. In Xenopus tropicalis (Western clawed frog), this protein is Adipose-secreted signaling protein.